Consider the following 222-residue polypeptide: 7-cyano-7-deazaguanine synthase (222 aa).

Residue 7–17 (LSGGMDSAVAT) participates in ATP binding. Residues Cys188, Cys196, Cys199, and Cys202 each coordinate Zn(2+).

It belongs to the QueC family. Requires Zn(2+) as cofactor.

It carries out the reaction 7-carboxy-7-deazaguanine + NH4(+) + ATP = 7-cyano-7-deazaguanine + ADP + phosphate + H2O + H(+). The protein operates within purine metabolism; 7-cyano-7-deazaguanine biosynthesis. Catalyzes the ATP-dependent conversion of 7-carboxy-7-deazaguanine (CDG) to 7-cyano-7-deazaguanine (preQ(0)). This is 7-cyano-7-deazaguanine synthase from Methanothermobacter thermautotrophicus (strain ATCC 29096 / DSM 1053 / JCM 10044 / NBRC 100330 / Delta H) (Methanobacterium thermoautotrophicum).